We begin with the raw amino-acid sequence, 312 residues long: L-lactate dehydrogenase (312 aa).

V14, D35, and Y66 together coordinate NAD(+). Substrate-binding residues include Q83 and R90. NAD(+)-binding positions include S103, 120–122 (ASN), and S145. 122–125 (NPVD) serves as a coordination point for substrate. 150-153 (DSAR) contributes to the substrate binding site. Residue H177 is the Proton acceptor of the active site. Y220 bears the Phosphotyrosine mark. A substrate-binding site is contributed by T229.

The protein belongs to the LDH/MDH superfamily. LDH family. As to quaternary structure, homotetramer.

Its subcellular location is the cytoplasm. It carries out the reaction (S)-lactate + NAD(+) = pyruvate + NADH + H(+). It participates in fermentation; pyruvate fermentation to lactate; (S)-lactate from pyruvate: step 1/1. Its function is as follows. Catalyzes the conversion of lactate to pyruvate. In Mycoplasma genitalium (strain ATCC 33530 / DSM 19775 / NCTC 10195 / G37) (Mycoplasmoides genitalium), this protein is L-lactate dehydrogenase.